We begin with the raw amino-acid sequence, 552 residues long: CTP synthase (552 aa).

The tract at residues 1–270 (MTKYVFVTGG…DRIICEELKL (270 aa)) is amidoligase domain. Ser-13 lines the CTP pocket. Ser-13 contributes to the UTP binding site. ATP-binding positions include 14 to 19 (SLGKGI) and Asp-71. Mg(2+) is bound by residues Asp-71 and Glu-144. Residues 151 to 153 (DIE), 191 to 196 (KTKPTQ), and Lys-227 each bind CTP. Residues 191-196 (KTKPTQ) and Lys-227 each bind UTP. The region spanning 295-547 (TIGMVGKYVD…VEAALANKQA (253 aa)) is the Glutamine amidotransferase type-1 domain. Gly-356 is an L-glutamine binding site. Cys-383 functions as the Nucleophile; for glutamine hydrolysis in the catalytic mechanism. Residues 384–387 (LGMQ), Glu-407, and Arg-473 each bind L-glutamine. Catalysis depends on residues His-520 and Glu-522.

It belongs to the CTP synthase family. In terms of assembly, homotetramer.

It carries out the reaction UTP + L-glutamine + ATP + H2O = CTP + L-glutamate + ADP + phosphate + 2 H(+). It catalyses the reaction L-glutamine + H2O = L-glutamate + NH4(+). The catalysed reaction is UTP + NH4(+) + ATP = CTP + ADP + phosphate + 2 H(+). The protein operates within pyrimidine metabolism; CTP biosynthesis via de novo pathway; CTP from UDP: step 2/2. Allosterically activated by GTP, when glutamine is the substrate; GTP has no effect on the reaction when ammonia is the substrate. The allosteric effector GTP functions by stabilizing the protein conformation that binds the tetrahedral intermediate(s) formed during glutamine hydrolysis. Inhibited by the product CTP, via allosteric rather than competitive inhibition. Functionally, catalyzes the ATP-dependent amination of UTP to CTP with either L-glutamine or ammonia as the source of nitrogen. Regulates intracellular CTP levels through interactions with the four ribonucleotide triphosphates. This chain is CTP synthase, found in Burkholderia cenocepacia (strain ATCC BAA-245 / DSM 16553 / LMG 16656 / NCTC 13227 / J2315 / CF5610) (Burkholderia cepacia (strain J2315)).